An 85-amino-acid polypeptide reads, in one-letter code: UPF0335 protein Oant_1161 (85 aa).

The protein belongs to the UPF0335 family.

The chain is UPF0335 protein Oant_1161 from Brucella anthropi (strain ATCC 49188 / DSM 6882 / CCUG 24695 / JCM 21032 / LMG 3331 / NBRC 15819 / NCTC 12168 / Alc 37) (Ochrobactrum anthropi).